Here is a 108-residue protein sequence, read N- to C-terminus: Thiosulfate sulfurtransferase GlpE (108 aa).

The Rhodanese domain maps to 17-105 (RQGAAVLVDI…WHRRFPANVA (89 aa)). Residue Cys65 is the Cysteine persulfide intermediate of the active site.

The protein belongs to the GlpE family.

The protein localises to the cytoplasm. It catalyses the reaction thiosulfate + hydrogen cyanide = thiocyanate + sulfite + 2 H(+). The catalysed reaction is thiosulfate + [thioredoxin]-dithiol = [thioredoxin]-disulfide + hydrogen sulfide + sulfite + 2 H(+). Functionally, transferase that catalyzes the transfer of sulfur from thiosulfate to thiophilic acceptors such as cyanide or dithiols. May function in a CysM-independent thiosulfate assimilation pathway by catalyzing the conversion of thiosulfate to sulfite, which can then be used for L-cysteine biosynthesis. The chain is Thiosulfate sulfurtransferase GlpE from Salmonella agona (strain SL483).